Reading from the N-terminus, the 379-residue chain is Cytochrome b (379 aa).

A run of 4 helical transmembrane segments spans residues 33 to 53 (FGSLLGACLTIQVITGLFLAM), 77 to 98 (WTIRYLHANGASMFFMCLFIHV), 113 to 133 (WNIGIMLLFSVMATAFMGYVL), and 178 to 198 (FFALHFILPFIISALAMIHLL). Heme b contacts are provided by H83 and H97. Heme b is bound by residues H182 and H196. H201 is a binding site for a ubiquinone. A run of 4 helical transmembrane segments spans residues 226–246 (TKDFLGLLLLILLLMTLTLFY), 288–308 (LGGVVALILSILILAIIPFLQ), 320–340 (LSQFLFWILVADLLTLTWIGG), and 347–367 (FISIGQTASILYFSLMVFIMP).

Belongs to the cytochrome b family. As to quaternary structure, the cytochrome bc1 complex contains 11 subunits: 3 respiratory subunits (MT-CYB, CYC1 and UQCRFS1), 2 core proteins (UQCRC1 and UQCRC2) and 6 low-molecular weight proteins (UQCRH/QCR6, UQCRB/QCR7, UQCRQ/QCR8, UQCR10/QCR9, UQCR11/QCR10 and a cleavage product of UQCRFS1). This cytochrome bc1 complex then forms a dimer. Requires heme b as cofactor.

The protein resides in the mitochondrion inner membrane. Functionally, component of the ubiquinol-cytochrome c reductase complex (complex III or cytochrome b-c1 complex) that is part of the mitochondrial respiratory chain. The b-c1 complex mediates electron transfer from ubiquinol to cytochrome c. Contributes to the generation of a proton gradient across the mitochondrial membrane that is then used for ATP synthesis. The protein is Cytochrome b (MT-CYB) of Lepilemur randrianasoloi (Randrianasoli's sportive lemur).